The primary structure comprises 137 residues: Large ribosomal subunit protein uL16 (137 aa).

It belongs to the universal ribosomal protein uL16 family. In terms of assembly, part of the 50S ribosomal subunit.

Its function is as follows. Binds 23S rRNA and is also seen to make contacts with the A and possibly P site tRNAs. The sequence is that of Large ribosomal subunit protein uL16 from Ectopseudomonas mendocina (strain ymp) (Pseudomonas mendocina).